A 237-amino-acid polypeptide reads, in one-letter code: Methylosome subunit pICln (237 aa).

An N-acetylserine modification is found at Ser2. Phosphoserine is present on residues Ser102, Ser144, Ser193, Ser195, Ser198, and Ser210. Residues 135-159 (LHPDPEDEDSDDYDGEEYDVEAHEQ) form a disordered region. The span at 139-153 (PEDEDSDDYDGEEYD) shows a compositional bias: acidic residues. Thr223 is subject to Phosphothreonine.

The protein belongs to the pICln (TC 1.A.47) family. In terms of assembly, component of the methylosome, a 20S complex containing at least PRMT5/SKB1, WDR77/MEP50 and CLNS1A/pICln. May mediate SNRPD1 and SNRPD3 methylation. Forms a 6S pICln-Sm complex composed of CLNS1A/pICln, SNRPD1, SNRPD2, SNRPE, SNRPF and SNRPG; ring-like structure where CLNS1A/pICln mimics additional Sm proteins and which is unable to assemble into the core snRNP. Interacts with LSM10 and LSM11.

The protein resides in the cytoplasm. It is found in the cytosol. The protein localises to the nucleus. It localises to the cytoskeleton. Functionally, involved in both the assembly of spliceosomal snRNPs and the methylation of Sm proteins. Chaperone that regulates the assembly of spliceosomal U1, U2, U4 and U5 small nuclear ribonucleoproteins (snRNPs), the building blocks of the spliceosome, and thereby plays an important role in the splicing of cellular pre-mRNAs. Most spliceosomal snRNPs contain a common set of Sm proteins SNRPB, SNRPD1, SNRPD2, SNRPD3, SNRPE, SNRPF and SNRPG that assemble in a heptameric protein ring on the Sm site of the small nuclear RNA to form the core snRNP (Sm core). In the cytosol, the Sm proteins SNRPD1, SNRPD2, SNRPE, SNRPF and SNRPG are trapped in an inactive 6S pICln-Sm complex by the chaperone CLNS1A that controls the assembly of the core snRNP. Dissociation by the SMN complex of CLNS1A from the trapped Sm proteins and their transfer to an SMN-Sm complex triggers the assembly of core snRNPs and their transport to the nucleus. The polypeptide is Methylosome subunit pICln (CLNS1A) (Homo sapiens (Human)).